The sequence spans 462 residues: NAD-capped RNA hydrolase NUDT12 (462 aa).

ANK repeat units lie at residues 11–40 (EIVTQFHCSAAEGDIAKLTGILSHSPSLLN), 45–74 (NGWTALMYAARNGHPEIVQFLLEKGCDRSI), and 78–98 (SRQTALDIAVFWGYKHIANLL). Lys185 bears the N6-succinyllysine mark. Zn(2+)-binding residues include Cys284 and Cys287. Lys292 bears the N6-succinyllysine mark. The Zn(2+) site is built by Cys302 and Cys307. Substrate-binding positions include Tyr318, 354–356 (AGF), Glu370, Glu374, and Glu415. The Nudix hydrolase domain occupies 319-453 (PRVDPVVIMQ…SRAIAHQLIK (135 aa)). Positions 354, 370, 374, and 415 each coordinate Mg(2+). The short motif at 355–376 (GFIEPGETIEDAVRREVEEESG) is the Nudix box element. The Microbody targeting signal motif lies at 460–462 (PNL).

The protein belongs to the Nudix hydrolase family. NudC subfamily. In terms of assembly, homodimer. Homodimerization is essential for its catalytic activity and protein stability. Interacts (via ANK repeats) with BLMH. It depends on Mg(2+) as a cofactor. The cofactor is Zn(2+).

It localises to the cytoplasm. The protein resides in the peroxisome. Its subcellular location is the cytoplasmic granule. It catalyses the reaction a 5'-end NAD(+)-phospho-ribonucleoside in mRNA + H2O = a 5'-end phospho-adenosine-phospho-ribonucleoside in mRNA + beta-nicotinamide D-ribonucleotide + 2 H(+). It carries out the reaction NAD(+) + H2O = beta-nicotinamide D-ribonucleotide + AMP + 2 H(+). The enzyme catalyses NADH + H2O = reduced beta-nicotinamide D-ribonucleotide + AMP + 2 H(+). The catalysed reaction is NADPH + H2O = reduced beta-nicotinamide D-ribonucleotide + adenosine 2',5'-bisphosphate + 2 H(+). In terms of biological role, mRNA decapping enzyme that specifically removes the nicotinamide adenine dinucleotide (NAD) cap from a subset of mRNAs by hydrolyzing the diphosphate linkage to produce nicotinamide mononucleotide (NMN) and 5' monophosphate mRNA. The NAD-cap is present at the 5'-end of some RNAs; in contrast to the canonical N7 methylguanosine (m7G) cap, the NAD cap promotes mRNA decay. Preferentially acts on NAD-capped transcripts in response to nutrient stress. Also acts on free nicotinamide adenine dinucleotide molecules: hydrolyzes NAD(H) into NMN(H) and AMP, and NADPH into NMNH and 2',5'-ADP. May act to regulate the concentration of peroxisomal nicotinamide nucleotide cofactors required for oxidative metabolism in this organelle. Regulates the levels of circadian clock components PER1, PER2, PER3 and CRY2 in the liver. The sequence is that of NAD-capped RNA hydrolase NUDT12 from Macaca fascicularis (Crab-eating macaque).